The sequence spans 445 residues: Histidinol dehydrogenase (445 aa).

NAD(+) is bound by residues Tyr134, Gln198, and Asn226. Residues Thr249, Gln271, and His274 each contribute to the substrate site. Residues Gln271 and His274 each contribute to the Zn(2+) site. Catalysis depends on proton acceptor residues Glu340 and His341. His341, Asp374, Glu428, and His433 together coordinate substrate. Asp374 is a binding site for Zn(2+). His433 contacts Zn(2+).

It belongs to the histidinol dehydrogenase family. Requires Zn(2+) as cofactor.

The enzyme catalyses L-histidinol + 2 NAD(+) + H2O = L-histidine + 2 NADH + 3 H(+). Its pathway is amino-acid biosynthesis; L-histidine biosynthesis; L-histidine from 5-phospho-alpha-D-ribose 1-diphosphate: step 9/9. In terms of biological role, catalyzes the sequential NAD-dependent oxidations of L-histidinol to L-histidinaldehyde and then to L-histidine. The protein is Histidinol dehydrogenase of Nocardia farcinica (strain IFM 10152).